A 213-amino-acid polypeptide reads, in one-letter code: Ribonuclease HII (213 aa).

In terms of domain architecture, RNase H type-2 spans 1–206; that stretch reads MICGVDEAGK…VSTLLAKKTQ (206 aa). Asp-6, Glu-7, and Asp-101 together coordinate a divalent metal cation.

This sequence belongs to the RNase HII family. Mn(2+) serves as cofactor. The cofactor is Mg(2+).

It is found in the cytoplasm. It carries out the reaction Endonucleolytic cleavage to 5'-phosphomonoester.. Its function is as follows. Endonuclease that specifically degrades the RNA of RNA-DNA hybrids. The sequence is that of Ribonuclease HII from Methanoregula boonei (strain DSM 21154 / JCM 14090 / 6A8).